A 504-amino-acid chain; its full sequence is Maturase K (504 aa).

Belongs to the intron maturase 2 family. MatK subfamily.

It is found in the plastid. The protein resides in the chloroplast. In terms of biological role, usually encoded in the trnK tRNA gene intron. Probably assists in splicing its own and other chloroplast group II introns. The chain is Maturase K from Lepidium virginicum (Virginia pepperweed).